The sequence spans 192 residues: A-type ATP synthase subunit E (192 aa).

A disordered region spans residues methionine 1 to alanine 66. The segment covering glutamate 8 to glutamate 26 has biased composition (basic and acidic residues). The span at glutamate 27 to arginine 49 shows a compositional bias: acidic residues. The segment covering glutamate 50–alanine 66 has biased composition (basic and acidic residues).

Belongs to the V-ATPase E subunit family. Has multiple subunits with at least A(3), B(3), C, D, E, F, H, I and proteolipid K(x).

The protein resides in the cell membrane. In terms of biological role, component of the A-type ATP synthase that produces ATP from ADP in the presence of a proton gradient across the membrane. The chain is A-type ATP synthase subunit E from Natronomonas pharaonis (strain ATCC 35678 / DSM 2160 / CIP 103997 / JCM 8858 / NBRC 14720 / NCIMB 2260 / Gabara) (Halobacterium pharaonis).